A 181-amino-acid polypeptide reads, in one-letter code: Protein GrpE (181 aa).

The protein belongs to the GrpE family. As to quaternary structure, homodimer.

It localises to the cytoplasm. Functionally, participates actively in the response to hyperosmotic and heat shock by preventing the aggregation of stress-denatured proteins, in association with DnaK and GrpE. It is the nucleotide exchange factor for DnaK and may function as a thermosensor. Unfolded proteins bind initially to DnaJ; upon interaction with the DnaJ-bound protein, DnaK hydrolyzes its bound ATP, resulting in the formation of a stable complex. GrpE releases ADP from DnaK; ATP binding to DnaK triggers the release of the substrate protein, thus completing the reaction cycle. Several rounds of ATP-dependent interactions between DnaJ, DnaK and GrpE are required for fully efficient folding. The sequence is that of Protein GrpE from Leptothrix cholodnii (strain ATCC 51168 / LMG 8142 / SP-6) (Leptothrix discophora (strain SP-6)).